Consider the following 147-residue polypeptide: MADSGPAGGAALAAPAPGPGSGSTGPRVYFQSPPGAAGEGPGGADDDGPVRRQGKVTVKYDRKELRKRLNLEEWILEQLTRLYDCQEEEIPELEIDVDELLDMESDDTRAARVKELLVDCYKPTEAFISGLLDKIRGMQKLSTPQKK.

Over residues 1 to 15 (MADSGPAGGAALAAP) the composition is skewed to low complexity. The segment at 1–55 (MADSGPAGGAALAAPAPGPGSGSTGPRVYFQSPPGAAGEGPGGADDDGPVRRQGK) is disordered. Ala2 is modified (N-acetylalanine). Ser21 bears the Phosphoserine mark. At Tyr29 the chain carries Phosphotyrosine. Ser32 is modified (phosphoserine). Thr57 carries the phosphothreonine modification. Residues 61–103 (DRKELRKRLNLEEWILEQLTRLYDCQEEEIPELEIDVDELLDM) adopt a coiled-coil conformation.

Belongs to the PP1 inhibitor family. Phosphorylated primarily on Thr-57 by PKC (in vitro). An unknown Ser is also phosphorylated by PKC (in vitro). Ubiquitous. Highly expressed in testis. Detected at low levels in the other tissues tested. Highly expressed in cardiac muscle, bladder and aorta (at protein level).

It is found in the cytoplasm. Inhibitor of PPP1CA. Has over 50-fold higher inhibitory activity when phosphorylated. The protein is Protein phosphatase 1 regulatory subunit 14B (Ppp1r14b) of Mus musculus (Mouse).